The chain runs to 430 residues: Long-chain specific acyl-CoA dehydrogenase, mitochondrial (430 aa).

The N-terminal 30 residues, 1–30, are a transit peptide targeting the mitochondrion; that stretch reads MAARLLLRSLRVLKARSAPRPPPSARCSHS. The interval 17-39 is disordered; it reads SAPRPPPSARCSHSGAEARLETP. Lys-42 carries the post-translational modification N6-acetyllysine. A phosphoserine mark is found at Ser-54 and Ser-55. Residues Lys-66 and Lys-81 each carry the N6-acetyllysine; alternate modification. N6-succinyllysine; alternate occurs at positions 66 and 81. Lys-92 and Lys-95 each carry N6-acetyllysine. Lys-165 is modified (N6-succinyllysine). 170–179 lines the FAD pocket; that stretch reads IAMTEPGAGS. A substrate-binding site is contributed by Ser-179. Ser-191 is subject to Phosphoserine. 203-205 is a binding site for FAD; the sequence is FIT. 227–228 contributes to the substrate binding site; it reads AH. Lys-240 is modified (N6-succinyllysine). N6-acetyllysine; alternate is present on residues Lys-254 and Lys-279. N6-succinyllysine; alternate occurs at positions 254 and 279. Substrate is bound by residues Tyr-282 and 289 to 292; that span reads PQER. The active-site Proton acceptor is Glu-291. Position 317 (Arg-317) interacts with FAD. Lys-318 carries the post-translational modification N6-acetyllysine. Position 322 is an N6-acetyllysine; alternate (Lys-322). N6-succinyllysine; alternate is present on Lys-322. Gln-328 serves as a coordination point for FAD. Lys-358 carries the N6-acetyllysine modification. The residue at position 362 (Ser-362) is a Phosphoserine. 385–389 is an FAD binding site; it reads QLHGG. 412 to 413 is a binding site for substrate; sequence GG. 414–416 contributes to the FAD binding site; that stretch reads TNE.

This sequence belongs to the acyl-CoA dehydrogenase family. Homotetramer. The cofactor is FAD. Post-translationally, acetylation at Lys-318 and Lys-322 in proximity of the cofactor-binding sites strongly reduces catalytic activity. These sites are deacetylated by SIRT3. Expressed in heart, skeletal muscle, kidney, and brain. Expressed in liver (at protein level).

It is found in the mitochondrion matrix. It carries out the reaction a long-chain 2,3-saturated fatty acyl-CoA + oxidized [electron-transfer flavoprotein] + H(+) = a long-chain (2E)-enoyl-CoA + reduced [electron-transfer flavoprotein]. The enzyme catalyses oxidized [electron-transfer flavoprotein] + hexadecanoyl-CoA + H(+) = (2E)-hexadecenoyl-CoA + reduced [electron-transfer flavoprotein]. It catalyses the reaction hexanoyl-CoA + oxidized [electron-transfer flavoprotein] + H(+) = (2E)-hexenoyl-CoA + reduced [electron-transfer flavoprotein]. The catalysed reaction is octanoyl-CoA + oxidized [electron-transfer flavoprotein] + H(+) = (2E)-octenoyl-CoA + reduced [electron-transfer flavoprotein]. It carries out the reaction decanoyl-CoA + oxidized [electron-transfer flavoprotein] + H(+) = (2E)-decenoyl-CoA + reduced [electron-transfer flavoprotein]. The enzyme catalyses dodecanoyl-CoA + oxidized [electron-transfer flavoprotein] + H(+) = (2E)-dodecenoyl-CoA + reduced [electron-transfer flavoprotein]. It catalyses the reaction tetradecanoyl-CoA + oxidized [electron-transfer flavoprotein] + H(+) = (2E)-tetradecenoyl-CoA + reduced [electron-transfer flavoprotein]. The catalysed reaction is octadecanoyl-CoA + oxidized [electron-transfer flavoprotein] + H(+) = (2E)-octadecenoyl-CoA + reduced [electron-transfer flavoprotein]. It carries out the reaction eicosanoyl-CoA + oxidized [electron-transfer flavoprotein] + H(+) = (2E)-eicosenoyl-CoA + reduced [electron-transfer flavoprotein]. The enzyme catalyses docosanoyl-CoA + oxidized [electron-transfer flavoprotein] + H(+) = (2E)-docosenoyl-CoA + reduced [electron-transfer flavoprotein]. It catalyses the reaction tetracosanoyl-CoA + oxidized [electron-transfer flavoprotein] + H(+) = (2E)-tetracosenoyl-CoA + reduced [electron-transfer flavoprotein]. The catalysed reaction is (5E)-tetradecenoyl-CoA + oxidized [electron-transfer flavoprotein] + H(+) = (2E,5E)-tetradecadienoyl-CoA + reduced [electron-transfer flavoprotein]. It carries out the reaction (5Z)-tetradecenoyl-CoA + oxidized [electron-transfer flavoprotein] + H(+) = (2E,5Z)-tetradecadienoyl-CoA + reduced [electron-transfer flavoprotein]. The enzyme catalyses oxidized [electron-transfer flavoprotein] + (9Z)-octadecenoyl-CoA + H(+) = (2E,9Z)-octadecadienoyl-CoA + reduced [electron-transfer flavoprotein]. It functions in the pathway lipid metabolism; mitochondrial fatty acid beta-oxidation. Its function is as follows. Long-chain specific acyl-CoA dehydrogenase is one of the acyl-CoA dehydrogenases that catalyze the first step of mitochondrial fatty acid beta-oxidation, an aerobic process breaking down fatty acids into acetyl-CoA and allowing the production of energy from fats. The first step of fatty acid beta-oxidation consists in the removal of one hydrogen from C-2 and C-3 of the straight-chain fatty acyl-CoA thioester, resulting in the formation of trans-2-enoyl-CoA. Among the different mitochondrial acyl-CoA dehydrogenases, long-chain specific acyl-CoA dehydrogenase can act on saturated and unsaturated acyl-CoAs with 6 to 24 carbons with a preference for 8 to 18 carbons long primary chains. The protein is Long-chain specific acyl-CoA dehydrogenase, mitochondrial of Mus musculus (Mouse).